We begin with the raw amino-acid sequence, 442 residues long: Amino-acid acetyltransferase (442 aa).

Residues 295 to 442 (EQARAATIED…RSKVLSKTIS (148 aa)) enclose the N-acetyltransferase domain.

Belongs to the acetyltransferase family. ArgA subfamily.

It is found in the cytoplasm. The catalysed reaction is L-glutamate + acetyl-CoA = N-acetyl-L-glutamate + CoA + H(+). It participates in amino-acid biosynthesis; L-arginine biosynthesis; N(2)-acetyl-L-ornithine from L-glutamate: step 1/4. The chain is Amino-acid acetyltransferase from Aeromonas salmonicida (strain A449).